Consider the following 144-residue polypeptide: Prefoldin subunit alpha (144 aa).

This sequence belongs to the prefoldin alpha subunit family. Heterohexamer of two alpha and four beta subunits.

The protein resides in the cytoplasm. Its function is as follows. Molecular chaperone capable of stabilizing a range of proteins. Seems to fulfill an ATP-independent, HSP70-like function in archaeal de novo protein folding. The chain is Prefoldin subunit alpha from Metallosphaera sedula (strain ATCC 51363 / DSM 5348 / JCM 9185 / NBRC 15509 / TH2).